The primary structure comprises 712 residues: Patatin-like phospholipase domain-containing protein ACLA_029670 (712 aa).

Positions 1–10 (MTSAEKSATR) are enriched in polar residues. Residues 1-20 (MTSAEKSATRNIYDPSALPD) are disordered. The helical transmembrane segment at 85-105 (WPFLFIVFAWITVLGIAYALT) threads the bilayer. Positions 275 to 466 (LCLSGGATFA…RTDIPIKALN (192 aa)) constitute a PNPLA domain. Positions 306 to 310 (GTSGG) match the GXSXG motif. Ser-308 serves as the catalytic Nucleophile. The active-site Proton acceptor is Asp-453. Basic and acidic residues predominate over residues 649 to 664 (FPERHSDYKDESHYTE). The interval 649–686 (FPERHSDYKDESHYTEVSDSLSTNSSRPHTPDARRGSI) is disordered. The segment covering 665–676 (VSDSLSTNSSRP) has biased composition (polar residues). Residues 677-686 (HTPDARRGSI) show a composition bias toward basic and acidic residues.

It belongs to the PLPL family.

It is found in the membrane. Its function is as follows. Probable lipid hydrolase. This chain is Patatin-like phospholipase domain-containing protein ACLA_029670, found in Aspergillus clavatus (strain ATCC 1007 / CBS 513.65 / DSM 816 / NCTC 3887 / NRRL 1 / QM 1276 / 107).